Consider the following 64-residue polypeptide: Alpha-mammal toxin AnCra1 (64 aa).

The 63-residue stretch at K2 to N64 folds into the LCN-type CS-alpha/beta domain. Intrachain disulfides connect C12/C63, C16/C36, C22/C46, and C26/C48.

The protein belongs to the long (4 C-C) scorpion toxin superfamily. Sodium channel inhibitor family. Alpha subfamily. In terms of tissue distribution, expressed by the venom gland.

It localises to the secreted. Alpha toxins bind voltage-independently at site-3 of sodium channels (Nav) and inhibit the inactivation of the activated channels, thereby blocking neuronal transmission. This toxin is active against mammals. The recombinant toxin selectively inhibits the fast inactivation of hNav1.7/SCN9A channel (EC(50)=136.7 nM). Is potent in inhibiting the fast inactivation of hNav1.7 and has little effect on the steady-state inactivation. In vivo, intravenous injection into mice induces muscle contraction, leading to severe paralysis and death. This is Alpha-mammal toxin AnCra1 from Androctonus crassicauda (Arabian fat-tailed scorpion).